Consider the following 211-residue polypeptide: Peptide methionine sulfoxide reductase MsrA (211 aa).

Residue Cys-52 is part of the active site.

It belongs to the MsrA Met sulfoxide reductase family.

The catalysed reaction is L-methionyl-[protein] + [thioredoxin]-disulfide + H2O = L-methionyl-(S)-S-oxide-[protein] + [thioredoxin]-dithiol. It carries out the reaction [thioredoxin]-disulfide + L-methionine + H2O = L-methionine (S)-S-oxide + [thioredoxin]-dithiol. Functionally, has an important function as a repair enzyme for proteins that have been inactivated by oxidation. Catalyzes the reversible oxidation-reduction of methionine sulfoxide in proteins to methionine. This Photobacterium profundum (strain SS9) protein is Peptide methionine sulfoxide reductase MsrA.